The chain runs to 79 residues: Tungsten-containing formylmethanofuran dehydrogenase 2 subunit G (79 aa).

4Fe-4S ferredoxin-type domains lie at 2 to 31 (VKIVIHEERCHGCGNCVIACPVNACNSPNV) and 51 to 79 (TVSVINEDLCEACMTCELACPVDAIEIKT). Positions 11, 14, 17, 21, 60, 63, 66, and 70 each coordinate [4Fe-4S] cluster.

Requires [4Fe-4S] cluster as cofactor.

It carries out the reaction N-formylmethanofuran + 2 oxidized [2Fe-2S]-[ferredoxin] + H2O = methanofuran + 2 reduced [2Fe-2S]-[ferredoxin] + CO2 + H(+). It functions in the pathway one-carbon metabolism; methanogenesis from CO(2); 5,10-methenyl-5,6,7,8-tetrahydromethanopterin from CO(2): step 1/3. Not inactivated by cyanide. Catalyzes the reversible oxidation of CO(2) and methanofuran (MFR) to N-formylmethanofuran (CHO-MFR). This enzyme is oxygen-labile. May function as an electron transfer protein. This chain is Tungsten-containing formylmethanofuran dehydrogenase 2 subunit G (fwdG), found in Methanopyrus kandleri (strain AV19 / DSM 6324 / JCM 9639 / NBRC 100938).